A 78-amino-acid polypeptide reads, in one-letter code: MMENNKRKRKARKKICVFCADKSKNIDYKDVHKLKKYITERGKILPRRISGNCAIHQRELTQAIKRSRHIALLPYTMD.

The protein belongs to the bacterial ribosomal protein bS18 family. As to quaternary structure, part of the 30S ribosomal subunit. Forms a tight heterodimer with protein bS6.

Binds as a heterodimer with protein bS6 to the central domain of the 16S rRNA, where it helps stabilize the platform of the 30S subunit. This Alkaliphilus oremlandii (strain OhILAs) (Clostridium oremlandii (strain OhILAs)) protein is Small ribosomal subunit protein bS18.